The chain runs to 314 residues: Coiled-coil domain-containing protein 42 like-2 (314 aa).

2 coiled-coil regions span residues 34–139 and 175–233; these read RLLE…RQEK and NKLL…WESR.

The protein belongs to the CFAP73 family.

In Xenopus laevis (African clawed frog), this protein is Coiled-coil domain-containing protein 42 like-2.